Consider the following 464-residue polypeptide: ATP synthase subunit beta (464 aa).

153-160 (GGAGVGKT) contributes to the ATP binding site.

Belongs to the ATPase alpha/beta chains family. In terms of assembly, F-type ATPases have 2 components, CF(1) - the catalytic core - and CF(0) - the membrane proton channel. CF(1) has five subunits: alpha(3), beta(3), gamma(1), delta(1), epsilon(1). CF(0) has three main subunits: a(1), b(2) and c(9-12). The alpha and beta chains form an alternating ring which encloses part of the gamma chain. CF(1) is attached to CF(0) by a central stalk formed by the gamma and epsilon chains, while a peripheral stalk is formed by the delta and b chains.

It is found in the cell membrane. It catalyses the reaction ATP + H2O + 4 H(+)(in) = ADP + phosphate + 5 H(+)(out). Produces ATP from ADP in the presence of a proton gradient across the membrane. The catalytic sites are hosted primarily by the beta subunits. The polypeptide is ATP synthase subunit beta (Acetivibrio thermocellus (strain ATCC 27405 / DSM 1237 / JCM 9322 / NBRC 103400 / NCIMB 10682 / NRRL B-4536 / VPI 7372) (Clostridium thermocellum)).